Here is a 430-residue protein sequence, read N- to C-terminus: Asparagine--tRNA ligase (430 aa).

The protein belongs to the class-II aminoacyl-tRNA synthetase family. Homodimer.

It is found in the cytoplasm. The enzyme catalyses tRNA(Asn) + L-asparagine + ATP = L-asparaginyl-tRNA(Asn) + AMP + diphosphate + H(+). The polypeptide is Asparagine--tRNA ligase (Listeria monocytogenes serovar 1/2a (strain ATCC BAA-679 / EGD-e)).